The sequence spans 620 residues: Chaperone protein HscA homolog (620 aa).

It belongs to the heat shock protein 70 family.

In terms of biological role, chaperone involved in the maturation of iron-sulfur cluster-containing proteins. Has a low intrinsic ATPase activity which is markedly stimulated by HscB. The sequence is that of Chaperone protein HscA homolog from Paracidovorax citrulli (strain AAC00-1) (Acidovorax citrulli).